A 399-amino-acid chain; its full sequence is MLGRSGYRALPLGDFDRFQQSSFGFLGSQKGCLSPEPGSVGPGADAPESWPSCLCHGLVSVLGFLLLLLTFPISGWFALKIVPTYERMIVFRLGRIRNPQGPGMVLLLPFIDSFQRVDLRTRAFNVPPCKLASKDGAVLSVGADVQFRIWDPVLSVMAVKDLNTATRMTAHNAMTKALLRRPLQEIQMEKLKIGDQLLLEINDVTRAWGLEVDRVELAVEAVLQPPQDSLTVPSLDSTLQQLALHLLGGSMNSAVGRVPSPGPDTLEMINEVEPPASLAGAGAEPSPKQPVAEGLLTALQPFLSEALVSQVGACYQFNVILPSGTQSIYFLDLTTGQGRVGHGEPDGIPDVVVEMAEADLQALLSKELRPLGAYMSGRLKVKGDLAVVMKLEAVLKALK.

The Tyrosine-type lysosomal sorting signal signature appears at 6-10 (GYRAL). Position 28 is a phosphoserine (Ser28). A helical; Signal-anchor for type III membrane protein transmembrane segment spans residues 58-78 (LVSVLGFLLLLLTFPISGWFA). Residues 79–399 (LKIVPTYERM…KLEAVLKALK (321 aa)) are Cytoplasmic-facing. The region spanning 288–399 (KQPVAEGLLT…KLEAVLKALK (112 aa)) is the SCP2 domain.

This sequence belongs to the band 7/mec-2 family. Interacts with STOM; may redistribute STOM from the plasma membrane to late endosomes. As to expression, expressed in dorsal root ganglion neurons.

It localises to the membrane. The protein resides in the cytoplasmic vesicle. Its subcellular location is the cell membrane. The protein localises to the late endosome membrane. It is found in the membrane raft. In terms of biological role, may play a role in cholesterol transfer to late endosomes. May play a role in modulating membrane acid-sensing ion channels. Can specifically inhibit proton-gated current of ASIC1 isoform 1. Can increase inactivation speed of ASIC3. May be involved in regulation of proton sensing in dorsal root ganglions. In Mus musculus (Mouse), this protein is Stomatin-like protein 1 (Stoml1).